The following is a 178-amino-acid chain: ATP-dependent protease subunit HslV (178 aa).

Residue T5 is part of the active site. Positions 160, 163, and 166 each coordinate Na(+).

It belongs to the peptidase T1B family. HslV subfamily. As to quaternary structure, a double ring-shaped homohexamer of HslV is capped on each side by a ring-shaped HslU homohexamer. The assembly of the HslU/HslV complex is dependent on binding of ATP.

Its subcellular location is the cytoplasm. The enzyme catalyses ATP-dependent cleavage of peptide bonds with broad specificity.. Allosterically activated by HslU binding. In terms of biological role, protease subunit of a proteasome-like degradation complex believed to be a general protein degrading machinery. The chain is ATP-dependent protease subunit HslV from Magnetococcus marinus (strain ATCC BAA-1437 / JCM 17883 / MC-1).